A 67-amino-acid chain; its full sequence is Large ribosomal subunit protein uL29 (67 aa).

Belongs to the universal ribosomal protein uL29 family.

This is Large ribosomal subunit protein uL29 from Sorangium cellulosum (strain So ce56) (Polyangium cellulosum (strain So ce56)).